Reading from the N-terminus, the 580-residue chain is Formate--tetrahydrofolate ligase (580 aa).

65 to 72 is a binding site for ATP; the sequence is TPHGEGKT.

It belongs to the formate--tetrahydrofolate ligase family.

The catalysed reaction is (6S)-5,6,7,8-tetrahydrofolate + formate + ATP = (6R)-10-formyltetrahydrofolate + ADP + phosphate. Its pathway is one-carbon metabolism; tetrahydrofolate interconversion. The polypeptide is Formate--tetrahydrofolate ligase (Shewanella baltica (strain OS223)).